The sequence spans 128 residues: NADH-ubiquinone oxidoreductase chain 3 (128 aa).

3 helical membrane-spanning segments follow: residues 3–23 (TIYT…NYLI), 52–72 (VAFI…SSIL), and 84–104 (YGLS…VYEI).

The protein belongs to the complex I subunit 3 family.

The protein resides in the mitochondrion membrane. The catalysed reaction is a ubiquinone + NADH + 5 H(+)(in) = a ubiquinol + NAD(+) + 4 H(+)(out). Its function is as follows. Core subunit of the mitochondrial membrane respiratory chain NADH dehydrogenase (Complex I) that is believed to belong to the minimal assembly required for catalysis. Complex I functions in the transfer of electrons from NADH to the respiratory chain. The immediate electron acceptor for the enzyme is believed to be ubiquinone. This chain is NADH-ubiquinone oxidoreductase chain 3 (ND3), found in Debaryomyces hansenii (strain ATCC 36239 / CBS 767 / BCRC 21394 / JCM 1990 / NBRC 0083 / IGC 2968) (Yeast).